Consider the following 165-residue polypeptide: Phosphopantetheine adenylyltransferase (165 aa).

Threonine 9 lines the substrate pocket. ATP is bound by residues 9-10 and histidine 17; that span reads TF. Substrate-binding residues include lysine 41, leucine 73, and arginine 87. Residues 88-90, glutamate 98, and 123-129 contribute to the ATP site; these read GLR and LQPIASR.

This sequence belongs to the bacterial CoaD family. Homohexamer. Requires Mg(2+) as cofactor.

It is found in the cytoplasm. It catalyses the reaction (R)-4'-phosphopantetheine + ATP + H(+) = 3'-dephospho-CoA + diphosphate. It functions in the pathway cofactor biosynthesis; coenzyme A biosynthesis; CoA from (R)-pantothenate: step 4/5. Functionally, reversibly transfers an adenylyl group from ATP to 4'-phosphopantetheine, yielding dephospho-CoA (dPCoA) and pyrophosphate. The protein is Phosphopantetheine adenylyltransferase of Rhizorhabdus wittichii (strain DSM 6014 / CCUG 31198 / JCM 15750 / NBRC 105917 / EY 4224 / RW1) (Sphingomonas wittichii).